The sequence spans 126 residues: Histone H2B 1.2 (126 aa).

Positions 1 to 12 are enriched in low complexity; that stretch reads MPEPAKSAPAPK. A disordered region spans residues 1–35; sequence MPEPAKSAPAPKKGSKKAVTKTPKKDGKKRRKSRK. Lys-6 and Lys-13 each carry N6-acetyllysine. Ser-15 bears the Phosphoserine mark. 2 positions are modified to N6-acetyllysine: Lys-16 and Lys-21. O-linked (GlcNAc) serine glycosylation is present at Ser-113. Lys-121 is covalently cross-linked (Glycyl lysine isopeptide (Lys-Gly) (interchain with G-Cter in ubiquitin)).

The protein belongs to the histone H2B family. As to quaternary structure, the nucleosome is a histone octamer containing two molecules each of H2A, H2B, H3 and H4 assembled in one H3-H4 heterotetramer and two H2A-H2B heterodimers. The octamer wraps approximately 147 bp of DNA. Monoubiquitination of Lys-121 by BRE1 gives a specific tag for epigenetic transcriptional activation and is also prerequisite for histone H3 'Lys-4' and 'Lys-79' methylation. In terms of processing, phosphorylated on Ser-15 during developmentally programmed apoptosis; which may facilitate apoptotic chromatin condensation. Post-translationally, glcNAcylation at Ser-113 promotes monoubiquitination of Lys-121. It fluctuates in response to extracellular glucose, and associates with transcribed genes.

Its subcellular location is the nucleus. It localises to the chromosome. In terms of biological role, core component of nucleosome. Nucleosomes wrap and compact DNA into chromatin, limiting DNA accessibility to the cellular machineries which require DNA as a template. Histones thereby play a central role in transcription regulation, DNA repair, DNA replication and chromosomal stability. DNA accessibility is regulated via a complex set of post-translational modifications of histones, also called histone code, and nucleosome remodeling. This Xenopus laevis (African clawed frog) protein is Histone H2B 1.2.